The chain runs to 190 residues: Prostaglandin-H2 D-isomerase (190 aa).

The signal sequence occupies residues 1–22 (MATHHTLWMGLVLLGLLGGLQA). Asn51 carries an N-linked (GlcNAc...) asparagine glycan. Residue Cys65 is the Nucleophile of the active site. N-linked (GlcNAc...) asparagine glycosylation occurs at Asn78. An intrachain disulfide couples Cys89 to Cys186.

It belongs to the calycin superfamily. Lipocalin family. In terms of assembly, monomer.

Its subcellular location is the rough endoplasmic reticulum. It localises to the nucleus membrane. The protein localises to the golgi apparatus. The protein resides in the cytoplasm. It is found in the perinuclear region. Its subcellular location is the secreted. The enzyme catalyses prostaglandin H2 = prostaglandin D2. Catalyzes the conversion of PGH2 to PGD2, a prostaglandin involved in smooth muscle contraction/relaxation and a potent inhibitor of platelet aggregation. Involved in a variety of CNS functions, such as sedation, NREM sleep and PGE2-induced allodynia, and may have an anti-apoptotic role in oligodendrocytes. Binds small non-substrate lipophilic molecules, including biliverdin, bilirubin, retinal, retinoic acid and thyroid hormone, and may act as a scavenger for harmful hydrophobic molecules and as a secretory retinoid and thyroid hormone transporter. Possibly involved in development and maintenance of the blood-brain, blood-retina, blood-aqueous humor and blood-testis barrier. It is likely to play important roles in both maturation and maintenance of the central nervous system and male reproductive system. Involved in PLA2G3-dependent maturation of mast cells. PLA2G3 is secreted by immature mast cells and acts on nearby fibroblasts upstream to PTDGS to synthesize PGD2, which in turn promotes mast cell maturation and degranulation via PTGDR. In Macaca fuscata fuscata (Japanese macaque), this protein is Prostaglandin-H2 D-isomerase (PTGDS).